The primary structure comprises 269 residues: MLEEINYDTKLFGLIGKNIKYTLSPYIHNFSFTTLGINAVYLVFDLDEMKFNRIINGLLEIAEGLNVTIPYKEEVMKYLDNTDTYSTRIQAVNTIYKKGGYNTDYLAIKNLVRKKIGNMSGYECYVYGAGGAAKAAAFALSELGCSSISIVNRTNLRANELVELLNKNGYNASIKENCNSTSNIVVVNSTPNPSVVPENCIQKSELVIEFVYKPVETELIKNAKKYSIKYIDGLEILVNQAVEAEKIWFNKSVSDEKIIEYLYARKLVW.

Residues 22–24 and threonine 68 contribute to the shikimate site; that span reads TLS. Lysine 72 serves as the catalytic Proton acceptor. The shikimate site is built by asparagine 93 and aspartate 104. Residues 128 to 132, 152 to 157, and phenylalanine 210 contribute to the NADP(+) site; these read GAGGA and NRTNLR. A shikimate-binding site is contributed by tyrosine 212. Glycine 233 contacts NADP(+).

Belongs to the shikimate dehydrogenase family. As to quaternary structure, homodimer.

It catalyses the reaction shikimate + NADP(+) = 3-dehydroshikimate + NADPH + H(+). It participates in metabolic intermediate biosynthesis; chorismate biosynthesis; chorismate from D-erythrose 4-phosphate and phosphoenolpyruvate: step 4/7. Involved in the biosynthesis of the chorismate, which leads to the biosynthesis of aromatic amino acids. Catalyzes the reversible NADPH linked reduction of 3-dehydroshikimate (DHSA) to yield shikimate (SA). This Saccharolobus islandicus (strain Y.N.15.51 / Yellowstone #2) (Sulfolobus islandicus) protein is Shikimate dehydrogenase (NADP(+)).